The primary structure comprises 100 residues: Small ribosomal subunit protein uS14c (100 aa).

This sequence belongs to the universal ribosomal protein uS14 family. Part of the 30S ribosomal subunit.

The protein localises to the plastid. It localises to the chloroplast. Its function is as follows. Binds 16S rRNA, required for the assembly of 30S particles. The protein is Small ribosomal subunit protein uS14c of Trieres chinensis (Marine centric diatom).